The chain runs to 262 residues: NADP-dependent mannitol dehydrogenase (262 aa).

NADP(+)-binding residues include isoleucine 23, aspartate 69, asparagine 96, and arginine 129. Serine 149 functions as the Proton donor in the catalytic mechanism. 5 residues coordinate NADP(+): tyrosine 169, lysine 173, valine 202, threonine 204, and glutamine 206. Tyrosine 169 (proton acceptor) is an active-site residue. Lysine 173 (lowers pKa of active site Tyr) is an active-site residue.

It belongs to the short-chain dehydrogenases/reductases (SDR) family. Homotetramer.

The enzyme catalyses D-mannitol + NADP(+) = D-fructose + NADPH + H(+). This Agaricus bisporus (White button mushroom) protein is NADP-dependent mannitol dehydrogenase (mtdH).